Consider the following 245-residue polypeptide: MIFVQQFEEVRSILEKAKKITVLTGAGASTESGIPDFRSANGLYADANVEMYLSRGYYNRSPKEFWKHYKEIFQINTFHQYKPNRGHRFLAELEEQGKDITILTQNIDGLHQLGGSKHVIDLHGTLQTAHCPKCKSGYDLQYMIDHEVPRCEKCNFILNPDVVLYGDTLPQYQNAIKRLYETDVLIVMGTSLKVQPVASFPQIAKREVGATTILVNEELTGQEYNFDFVFQNKIGEFVEGLSSMK.

The Deacetylase sirtuin-type domain maps to 1-245; that stretch reads MIFVQQFEEV…EFVEGLSSMK (245 aa). NAD(+) is bound by residues A26, T30, F37, R38, Q105, I107, D108, and H123. F37 contacts nicotinamide. The nicotinamide site is built by I107 and D108. H123 functions as the Proton acceptor in the catalytic mechanism. Zn(2+) contacts are provided by C131, C134, C151, and C154. T190, S191, N216, and I234 together coordinate NAD(+).

The protein belongs to the sirtuin family. Class U subfamily. The cofactor is Zn(2+).

The protein localises to the cytoplasm. The enzyme catalyses N(6)-acetyl-L-lysyl-[protein] + NAD(+) + H2O = 2''-O-acetyl-ADP-D-ribose + nicotinamide + L-lysyl-[protein]. NAD-dependent protein deacetylase which modulates the activities of several enzymes which are inactive in their acetylated form. The polypeptide is NAD-dependent protein deacetylase (Bacillus cereus (strain ATCC 14579 / DSM 31 / CCUG 7414 / JCM 2152 / NBRC 15305 / NCIMB 9373 / NCTC 2599 / NRRL B-3711)).